A 393-amino-acid chain; its full sequence is NAD(P)H-quinone oxidoreductase subunit H, chloroplastic (393 aa).

The protein belongs to the complex I 49 kDa subunit family. In terms of assembly, NDH is composed of at least 16 different subunits, 5 of which are encoded in the nucleus.

The protein resides in the plastid. It is found in the chloroplast thylakoid membrane. It catalyses the reaction a plastoquinone + NADH + (n+1) H(+)(in) = a plastoquinol + NAD(+) + n H(+)(out). The catalysed reaction is a plastoquinone + NADPH + (n+1) H(+)(in) = a plastoquinol + NADP(+) + n H(+)(out). NDH shuttles electrons from NAD(P)H:plastoquinone, via FMN and iron-sulfur (Fe-S) centers, to quinones in the photosynthetic chain and possibly in a chloroplast respiratory chain. The immediate electron acceptor for the enzyme in this species is believed to be plastoquinone. Couples the redox reaction to proton translocation, and thus conserves the redox energy in a proton gradient. This Psilotum nudum (Whisk fern) protein is NAD(P)H-quinone oxidoreductase subunit H, chloroplastic.